A 465-amino-acid polypeptide reads, in one-letter code: Glutamate--tRNA ligase (465 aa).

The 'HIGH' region signature appears at 11 to 21 (PSPTGYLHIGG). A 'KMSKS' region motif is present at residues 243–247 (KLSKR). ATP is bound at residue Lys246.

It belongs to the class-I aminoacyl-tRNA synthetase family. Glutamate--tRNA ligase type 1 subfamily. Monomer.

The protein resides in the cytoplasm. It catalyses the reaction tRNA(Glu) + L-glutamate + ATP = L-glutamyl-tRNA(Glu) + AMP + diphosphate. In terms of biological role, catalyzes the attachment of glutamate to tRNA(Glu) in a two-step reaction: glutamate is first activated by ATP to form Glu-AMP and then transferred to the acceptor end of tRNA(Glu). The polypeptide is Glutamate--tRNA ligase (Aromatoleum aromaticum (strain DSM 19018 / LMG 30748 / EbN1) (Azoarcus sp. (strain EbN1))).